Here is a 523-residue protein sequence, read N- to C-terminus: UDP-glucuronosyltransferase 3A1 (523 aa).

The N-terminal stretch at 1–23 (MAVGRKSLILSLLIQHFVLLHGA) is a signal peptide. The Extracellular portion of the chain corresponds to 24 to 483 (KILTVCFLGG…YSYQQPLYQQ (460 aa)). N-linked (GlcNAc...) asparagine glycosylation occurs at N125. A helical transmembrane segment spans residues 484-504 (YLLDVFLFVCVCVIGACYLTV). Residues 505 to 523 (KLLKMFIQKLCSFRKLKQN) are Cytoplasmic-facing.

The protein belongs to the UDP-glycosyltransferase family.

The protein resides in the membrane. It carries out the reaction glucuronate acceptor + UDP-alpha-D-glucuronate = acceptor beta-D-glucuronoside + UDP + H(+). UDP-glucuronosyltransferases catalyze phase II biotransformation reactions in which lipophilic substrates are conjugated with glucuronic acid to increase water solubility and enhance excretion. They are of major importance in the conjugation and subsequent elimination of potentially toxic xenobiotics and endogenous compounds. This is UDP-glucuronosyltransferase 3A1 (ugt3a1) from Xenopus laevis (African clawed frog).